Consider the following 389-residue polypeptide: Nicotinate phosphoribosyltransferase (389 aa).

A Phosphohistidine; by autocatalysis modification is found at His-216.

This sequence belongs to the NAPRTase family. Post-translationally, transiently phosphorylated on a His residue during the reaction cycle. Phosphorylation strongly increases the affinity for substrates and increases the rate of nicotinate D-ribonucleotide production. Dephosphorylation regenerates the low-affinity form of the enzyme, leading to product release.

It carries out the reaction nicotinate + 5-phospho-alpha-D-ribose 1-diphosphate + ATP + H2O = nicotinate beta-D-ribonucleotide + ADP + phosphate + diphosphate. The protein operates within cofactor biosynthesis; NAD(+) biosynthesis; nicotinate D-ribonucleotide from nicotinate: step 1/1. Catalyzes the synthesis of beta-nicotinate D-ribonucleotide from nicotinate and 5-phospho-D-ribose 1-phosphate at the expense of ATP. The sequence is that of Nicotinate phosphoribosyltransferase from Ralstonia pickettii (strain 12J).